Consider the following 505-residue polypeptide: MAQIDFRKKINWHRRYRSPQGVKTEHEILRIFESDRGRIINSPAIRRLQQKTQVFPLERNAAVRTRLTHSMEVQQVGRYIAKEILSRMKELKLLEAYGLDELTGPFESIVEMSCLMHDIGNPPFGHFGEAAINDWFRQRLHPEDAESQPLTDDRCRVRGLRLRDGEEPLNELRRKIRQDLCHFEGNAQGIRLVHTLMRMNLTWAQVGGILKYTRPAWWRGETPETHHYLMKKPGYYLSEEAYIARLRKELNLALYSRFPLTWIMEAADDISYCVADLEDAVEKRIYTLEQLYHHLHDAWGQHEKGSLFSLVVENAWEKSRSNSLSRSTEDQFFMYLRVNTLNKLVPYAAQRFIDNLPAIFAGTFNHALLEDASECSDLLKLYKNVAVKHVFSHPDVERLELQGYRVISGLLEIYRPLLSLSLSDFTELVEKERVKRFPIESRLFHKLSTPHRLAYVEAVSKLPSDSPEFPLWEYYYRCRLLQDYISGMTDLYAWDEYRRLMAVEQ.

Residues 66 to 273 enclose the HD domain; the sequence is RLTHSMEVQQ…MEAADDISYC (208 aa).

The protein belongs to the dGTPase family. Type 1 subfamily. In terms of assembly, homotetramer. Requires Mg(2+) as cofactor.

It catalyses the reaction dGTP + H2O = 2'-deoxyguanosine + triphosphate + H(+). Inhibited by the action of reducing agents such as dithiothreitol and 2-mercaptoethanol. Functionally, dGTPase preferentially hydrolyzes dGTP over the other canonical NTPs. The protein is Deoxyguanosinetriphosphate triphosphohydrolase of Shigella boydii.